A 363-amino-acid polypeptide reads, in one-letter code: 3-dehydroquinate synthase (363 aa).

NAD(+) is bound by residues 71–76, 105–109, 129–130, K142, K151, and 169–172; these read DGEQYK, GVIGD, TT, and CLKT. Residues E184, H247, and H264 each coordinate Zn(2+).

This sequence belongs to the sugar phosphate cyclases superfamily. Dehydroquinate synthase family. NAD(+) is required as a cofactor. Requires Co(2+) as cofactor. Zn(2+) serves as cofactor.

It is found in the cytoplasm. The catalysed reaction is 7-phospho-2-dehydro-3-deoxy-D-arabino-heptonate = 3-dehydroquinate + phosphate. Its pathway is metabolic intermediate biosynthesis; chorismate biosynthesis; chorismate from D-erythrose 4-phosphate and phosphoenolpyruvate: step 2/7. In terms of biological role, catalyzes the conversion of 3-deoxy-D-arabino-heptulosonate 7-phosphate (DAHP) to dehydroquinate (DHQ). The protein is 3-dehydroquinate synthase of Vibrio vulnificus (strain CMCP6).